The chain runs to 673 residues: ATP-dependent DNA helicase Rep (673 aa).

In terms of domain architecture, UvrD-like helicase ATP-binding spans Met1–Ser280. Residues Ala22–Thr29 and Arg278 each bind ATP. A UvrD-like helicase C-terminal domain is found at Gly281–Gly562.

Belongs to the helicase family. UvrD subfamily. In terms of assembly, homodimer in association with DNA.

The catalysed reaction is Couples ATP hydrolysis with the unwinding of duplex DNA by translocating in the 3'-5' direction.. It catalyses the reaction ATP + H2O = ADP + phosphate + H(+). With respect to regulation, binding to DNA induces dimerization, which is required for DNA helicase activity. Helicase activity is stimulated by PriC. Its function is as follows. Rep helicase is a single-stranded (ss)DNA-dependent ATPase involved in DNA replication; it can initiate unwinding at a nick in the DNA. It binds to ssDNA and acts in a progressive fashion along the DNA in the 3' to 5' direction. Binds double-stranded (ds)DNA with a 5' ss- but not 3' ss-extension and forked structures with either lagging or leading ssDNA. Part of the PriC-Rep pathway for restart of stalled replication forks, which reloads the DnaB replicative helicase on sites other than the origin of replication. The chain is ATP-dependent DNA helicase Rep from Escherichia coli (strain K12).